The following is a 115-amino-acid chain: Secapin (115 aa).

Residues 1-24 form the signal peptide; the sequence is MRFQVYILHLCFFILVVLTYLSQG. Positions 25–90 are excised as a propeptide; that stretch reads QSYTTTTTTS…STENFDITNR (66 aa). A disulfide bridge connects residues C99 and C110.

This sequence belongs to the secapin family. In terms of tissue distribution, expressed in the epidermis, fat body and venom gland.

The protein localises to the secreted. Its function is as follows. Serine protease inhibitor which exhibits antifibrinolytic, antielastolytic and antimicrobial activities. Displays antimicrobial activity against bacteria and fungi. Likely functions in the innate immune response to microbial infection and possibly in the venom, as an antifibrinolytic agent. The recombinant form inhibits trypsin (IC(50)=80.02 nM, Ki=127.25 nM), chymotrypsin (IC(50)=393.78 nM, Ki=432.59 nM), the microbial serine proteases subtilisin A (IC(50)=379.20 nM, Ki=492.77 nM) and proteinase K (IC(50)=189.43 nM, Ki=271.76 nM), plasmin (IC(50)=457.98 nM, Ki=502.91 nM), human elastase (IC(50)=347.81 nM, Ki=469.90 nM) and porcine elastase (IC(50)=94.70 nM, Ki=125.62 nM). Does not inhibit thrombin. Binds to human plasmin and inhibits the plasmin-mediated degradation of fibrin to fibrin degradation products, indicating its role as an anti-fibrinolytic agent. Also binds to bacterial and fungal surfaces. Exhibits antimicrobial activity against the Gram-positive bacteria B.thuringiensis (MIC=4.21 uM) and P.larvae (MIC=11.13 uM), the Gram-negative bacteria E.coli (MIC=6.50 uM) and the multidrug-resistant A.baumannii (MIC=5 ug/ml, MBC=10 ug/ml), as well as against the fungus B.bassiana (IC(50)=2.57 uM). The synthetic peptide also exhibits antimicrobial activity against the Gram-positive bacterium P.larvae (MIC=41.12 uM), the Gram-negative bacterium P.aeruginosa (MIC=65.75 uM), and the fungus B.bassiana (IC(50)=44.27 uM). Is also able to prevent A.baumannii biofilm formation and eliminate established A.baumannii biofilms. In vitro, does not induce an inflammatory response and has no cytotoxic activity against mammalian cells. This chain is Secapin, found in Apis cerana (Indian honeybee).